A 188-amino-acid chain; its full sequence is UPF0488 protein C8orf33 homolog (188 aa).

3 disordered regions span residues 1 to 65 (MAAP…AEAQ), 87 to 112 (QRPTPKQKEQALGAIRTLRSQRTPLP), and 144 to 182 (AHSAQVQPVGEAARKKSRRVCRPRPEGRSKGTSDTRDEE). Ala-2 is subject to N-acetylalanine. Phosphoserine is present on Ser-41. The segment covering 166 to 182 (PRPEGRSKGTSDTRDEE) has biased composition (basic and acidic residues).

The protein belongs to the UPF0488 family.

The chain is UPF0488 protein C8orf33 homolog from Bos taurus (Bovine).